A 279-amino-acid chain; its full sequence is Cyanocobalamin reductase / alkylcobalamin dealkylase (279 aa).

Residues Asp104, 115-118 (ILAQ), 129-131 (YYQ), Cys149, and Ile160 contribute to the substrate site. The tract at residues 239-279 (PSEHPSTTSELPLSLLTKPQNSRRARSWLSPSVSPPVSPGP) is disordered. Residues 243-257 (PSTTSELPLSLLTKP) are compositionally biased toward low complexity. A phosphoserine mark is found at Ser247, Ser272, and Ser276.

Belongs to the MMACHC family. In terms of assembly, monomer in the absence of bound substrate. Homodimer; dimerization is triggered by binding to FMN or adenosylcobalamin. Interacts with LMBRD1 and ABCD4; the interaction ensures the transport of cobalamin from the lysosome to the cytoplasm. Forms a multiprotein complex with MMADHC, MTR and MTRR; the interaction with MTR could modulate MMACHC-dependent processing of cobalamin. Heterodimer with MMADHC; the interaction might play a role in the regulation of the balance between AdoCbl and MeCbl synthesis. It depends on FAD as a cofactor. The cofactor is FMN. As to expression, detected in liver and kidney (at protein level). Detected in embryos.

The protein resides in the cytoplasm. Its subcellular location is the cytosol. It carries out the reaction 2 cob(II)alamin-[cyanocobalamin reductase] + 2 hydrogen cyanide + NADP(+) = 2 cyanocob(III)alamin + 2 apo-[cyanocobalamin reductase] + NADPH + H(+). It catalyses the reaction apo-[alkylcobalamin reductase] + an R-cob(III)alamin + glutathione = cob(I)alamin-[alkylcobalamin reductase] + an S-substituted glutathione + H(+). The enzyme catalyses apo-[alkylcobalamin reductase] + methylcob(III)alamin + glutathione = S-methyl glutathione + cob(I)alamin-[alkylcobalamin reductase] + H(+). The catalysed reaction is apo-[alkylcobalamin reductase] + adenosylcob(III)alamin + glutathione = S-adenosylglutathione + cob(I)alamin-[alkylcobalamin reductase] + H(+). Functionally, cobalamin (vitamin B12) cytosolic chaperone that catalyzes the reductive decyanation of cyanocob(III)alamin (cyanocobalamin, CNCbl) to yield cob(II)alamin and cyanide, using FAD or FMN as cofactors and NADPH as cosubstrate. Cyanocobalamin constitutes the inactive form of vitamin B12 introduced from the diet, and is converted into the active cofactors methylcobalamin (MeCbl) involved in methionine biosynthesis, and 5'-deoxyadenosylcobalamin (AdoCbl) involved in the TCA cycle. Forms a complex with the lysosomal transporter ABCD4 and its chaperone LMBRD1, to transport cobalamin across the lysosomal membrane into the cytosol. The processing of cobalamin in the cytosol occurs in a multiprotein complex composed of at least MMACHC, MMADHC, MTRR (methionine synthase reductase) and MTR (methionine synthase) which may contribute to shuttle safely and efficiently cobalamin towards MTR in order to produce methionine. Also acts as a glutathione transferase by catalyzing the dealkylation of the alkylcob(III)alamins MeCbl and AdoCbl, using the thiolate of glutathione for nucleophilic displacement to generate cob(I)alamin and the corresponding glutathione thioether. The conversion of incoming MeCbl or AdoCbl into a common intermediate cob(I)alamin is necessary to meet the cellular needs for both cofactors. Cysteine and homocysteine cannot substitute for glutathione in this reaction. The protein is Cyanocobalamin reductase / alkylcobalamin dealkylase of Mus musculus (Mouse).